Consider the following 130-residue polypeptide: MAQVQYAGTGRRKNAVARVRLVPGTGKITVNGREVESYIPHADMRLVINQPFAATQTEGSYDTLVNVNGGGVSGQAGAIRHGIARALLQVDPDFRSALKRAGLLTRDARMVERKKPGLKKARKASQFSKR.

A disordered region spans residues Val111–Arg130. Over residues Pro116–Arg130 the composition is skewed to basic residues.

This sequence belongs to the universal ribosomal protein uS9 family.

In Lactococcus lactis subsp. lactis (strain IL1403) (Streptococcus lactis), this protein is Small ribosomal subunit protein uS9.